A 293-amino-acid polypeptide reads, in one-letter code: Ankyrin repeat and SOCS box protein 11 (293 aa).

ANK repeat units lie at residues D36 to M65, D69 to A98, D102 to P131, L134 to M163, S167 to C196, G199 to S228, and E232 to Q259. In terms of domain architecture, SOCS box spans S244–H293.

Belongs to the ankyrin SOCS box (ASB) family. In terms of assembly, substrate-recognition component of the ECS(ASB11) complex, composed of asb11, cul5, elob, eloc and rnf7/rbx2. As to expression, expressed in the developing nervous system: localizes to neural plate margins and is abutting the proneuronal zone.

The protein localises to the endoplasmic reticulum. The protein operates within protein modification; protein ubiquitination. Functionally, substrate-recognition component of a cullin-5-RING E3 ubiquitin-protein ligase complex (ECS complex, also named CRL5 complex), which mediates the ubiquitination and subsequent proteasomal degradation of target proteins. Acts as a regulator of the neuronal progenitor compartment size by maintaining the neural precursors in the proliferating undifferentiated state. The ECS(ASB11) complex acts as a positive regulator of Notch signaling pathway by mediating ubiquitination and degradation of DeltaA (dla). Also acts as a regulator of regenerative myogenesis. The sequence is that of Ankyrin repeat and SOCS box protein 11 from Danio rerio (Zebrafish).